A 91-amino-acid polypeptide reads, in one-letter code: Small ribosomal subunit protein bS20 (91 aa).

The segment at 1–23 (MANTPSAKKRAKQAEKRRSHNAS) is disordered. The span at 7–20 (AKKRAKQAEKRRSH) shows a compositional bias: basic residues.

Belongs to the bacterial ribosomal protein bS20 family.

Binds directly to 16S ribosomal RNA. The chain is Small ribosomal subunit protein bS20 from Pseudomonas paraeruginosa (strain DSM 24068 / PA7) (Pseudomonas aeruginosa (strain PA7)).